The chain runs to 417 residues: Mitochondrial tRNA-specific 2-thiouridylase 1 (417 aa).

ATP-binding positions include 10–17 (ALSGGVDS) and methionine 36. An interaction with target base in tRNA region spans residues 96-98 (NPD). Residue cysteine 101 is the Nucleophile of the active site. Cysteines 101 and 222 form a disulfide. Residue glycine 126 coordinates ATP. The tract at residues 171 to 173 (KDQ) is interaction with tRNA. The active-site Cysteine persulfide intermediate is cysteine 222. Residues 334 to 335 (RH) form an interaction with tRNA region. Residues 397-417 (KNRTRVAPEASSDSPGLHPTS) are disordered. Polar residues predominate over residues 407 to 417 (SSDSPGLHPTS).

The protein belongs to the MnmA/TRMU family. As to expression, widely expressed but most abundant in tissues with high metabolic rate including heart, liver and brain. Expression is low in spleen, testis, lung and skeletal muscle. Also expressed in inner ear.

The protein localises to the mitochondrion. The enzyme catalyses 5-taurinomethyluridine(34) in tRNA + S-sulfanyl-L-cysteinyl-[protein] + AH2 + ATP = 5-taurinomethyl-2-thiouridine(34) in tRNA + L-cysteinyl-[protein] + A + AMP + diphosphate + H(+). Functionally, catalyzes the 2-thiolation of uridine at the wobble position (U34) of mitochondrial tRNA(Lys), tRNA(Glu) and tRNA(Gln). Required for the formation of 5-taurinomethyl-2-thiouridine (tm5s2U) of mitochondrial tRNA(Lys), tRNA(Glu), and tRNA(Gln) at the wobble position. ATP is required to activate the C2 atom of the wobble base. The chain is Mitochondrial tRNA-specific 2-thiouridylase 1 (Trmu) from Mus musculus (Mouse).